Consider the following 400-residue polypeptide: Tyrosine-specific transport system 1 (400 aa).

A run of 12 helical transmembrane segments spans residues 5–25 (VGSTLLVAGTMIGAGMLAMPL), 34–54 (FTLVLLLGLWALLTFSALLFV), 80–100 (IIATAVLIIFLYALIAAYISG), 117–137 (VSVLLFTVIFGSFIVIGTHSV), 143–163 (VLFFVMLAAFAVVLSLMLPEI), 176–196 (ALIISASPVFFTAFGFHGSIP), 211–231 (FSILVGSAITLCAYILWQLST), 250–270 (LNGLVKATFAITGSNVIASAV), 273–293 (FSTLALITSFLGVGLGLLECI), 313–333 (LTFIPPLVFALFYPEGFILAL), 335–355 (YAGQMFAFYAVVLPVSLVWKA), and 370–390 (NLTLIIVLVLGVLITSIPFAI).

Belongs to the amino acid/polyamine transporter 2 family. Mtr/TnaB/TyrP permease subfamily.

It localises to the cell inner membrane. The enzyme catalyses L-tyrosine(in) + H(+)(in) = L-tyrosine(out) + H(+)(out). Functionally, transports tyrosine across the cytoplasmic membrane. The transport system is energized by the proton motive force. This Haemophilus influenzae (strain ATCC 51907 / DSM 11121 / KW20 / Rd) protein is Tyrosine-specific transport system 1 (tyrP-A).